The following is a 527-amino-acid chain: MILSSYNTIQSVFCCCCCCSVQKRQMRTQISLSTDEELPEKYTQRRRPWLSQLSNKKQSNTGRVQPSKRKPLPPLPPSEVAEEKIQVKALYDFLPREPCNLALRRAEEYLILEKYNPHWWKARDRLGNEGLIPSNYVTENKITNLEIYEWYHRNITRNQAEHLLRQESKEGAFIVRDSRHLGSYTISVFMGARRSTEAAIKHYQIKKNDSGQWYVAERHAFQSIPELIWYHQHNAAGLMTRLRYPVGLMGSCLPATAGFSYEKWEIDPSELAFIKEIGSGQFGVVHLGEWRSHIQVAIKAINEGSMSEEDFIEEAKVMMKLSHSKLVQLYGVCIQRKPLYIVTEFMENGCLLNYLRENKGKLRKEMLLSVCQDICEGMEYLERNGYIHRDLAARNCLVSSTCIVKISDFGMTRYVLDDEYVSSFGAKFPIKWSPPEVFLFNKYSSKSDVWSFGVLMWEVFTEGKMPFENKSNLQVVEAISEGFRLYRPHLAPMSIYEVMYSCWHEKPEGRPTFAELLRAVTEIAETW.

The interval 35–79 is disordered; sequence DEELPEKYTQRRRPWLSQLSNKKQSNTGRVQPSKRKPLPPLPPSE. Over residues 51-64 the composition is skewed to polar residues; that stretch reads SQLSNKKQSNTGRV. Residues 68-73 carry the Nuclear localization signal motif; that stretch reads KRKPLP. Residues 82 to 142 enclose the SH3 domain; that stretch reads EEKIQVKALY…PSNYVTENKI (61 aa). Position 91 is a phosphotyrosine; by autocatalysis (Tyr91). An SH2 domain is found at 150–246; the sequence is WYHRNITRNQ…GLMTRLRYPV (97 aa). The 257-residue stretch at 271-527 folds into the Protein kinase domain; the sequence is LAFIKEIGSG…RAVTEIAETW (257 aa). ATP-binding positions include 277–285 and Lys299; that span reads IGSGQFGVV. Asp390 (proton acceptor) is an active-site residue. Residue Tyr420 is modified to Phosphotyrosine; by FYN and autocatalysis.

It belongs to the protein kinase superfamily. Tyr protein kinase family. TEC subfamily. Interacts with PARP1 and EEF1A1. Interacts with SH2D2A. Interacts with FYN. Phosphorylated at Tyr-420 by FYN. Autophosphorylation at Tyr-91 is critical for the activation of TXK, leading to the up-regulation of IFN-gamma gene transcription. Post-translationally, the cysteine string at the N-terminus is palmitoylated and required for the proper subcellular location. Expressed in T-cells and some myeloid cell lines. Expressed in Th1/Th0 cells with IFN-gamma-producing potential.

The protein resides in the cytoplasm. It is found in the nucleus. Its subcellular location is the cell membrane. It carries out the reaction L-tyrosyl-[protein] + ATP = O-phospho-L-tyrosyl-[protein] + ADP + H(+). Activated by phosphorylation by FYN. Its function is as follows. Non-receptor tyrosine kinase that plays a redundant role with ITK in regulation of the adaptive immune response. Regulates the development, function and differentiation of conventional T-cells and nonconventional NKT-cells. When antigen presenting cells (APC) activate T-cell receptor (TCR), a series of phosphorylation leads to the recruitment of TXK to the cell membrane, where it is phosphorylated at Tyr-420. Phosphorylation leads to TXK full activation. Also contributes to signaling from many receptors and participates in multiple downstream pathways, including regulation of the actin cytoskeleton. Like ITK, can phosphorylate PLCG1, leading to its localization in lipid rafts and activation, followed by subsequent cleavage of its substrates. In turn, the endoplasmic reticulum releases calcium in the cytoplasm and the nuclear activator of activated T-cells (NFAT) translocates into the nucleus to perform its transcriptional duty. Plays a role in the positive regulation of IFNG transcription in T-helper 1 cells as part of an IFNG promoter-binding complex with PARP1 and EEF1A1. Within the complex, phosphorylates both PARP1 and EEF1A1. Also phosphorylates key sites in LCP2 leading to the up-regulation of Th1 preferred cytokine IL-2. Phosphorylates 'Tyr-201' of CTLA4 which leads to the association of PI-3 kinase with the CTLA4 receptor. The polypeptide is Tyrosine-protein kinase TXK (TXK) (Homo sapiens (Human)).